A 232-amino-acid chain; its full sequence is MKKTVVVFSGGQDSTTCLIQALEQYDEVHCITFNYGQRHKEEIEVAQRVSQLLGATAHKVLDVSLLNELAISSLTRDNIPVPDFKQSEQSDIPSTFVPGRNILFLTLAAIYAYQIGAESVITGVCETDFSGYPDCRDEFVKALNHAVNLGIARDIQFITPLMWLDKAQTWALADYYGKLDFVRHNTLTCYNGIQGDGCGQCAACHLRERGLHGYLQDKNAVMDAMKNKVGLK.

8–18 (FSGGQDSTTCL) contacts ATP. Zn(2+) is bound by residues Cys-189, Cys-198, Cys-201, and Cys-204.

Belongs to the QueC family. Zn(2+) serves as cofactor.

The enzyme catalyses 7-carboxy-7-deazaguanine + NH4(+) + ATP = 7-cyano-7-deazaguanine + ADP + phosphate + H2O + H(+). The protein operates within purine metabolism; 7-cyano-7-deazaguanine biosynthesis. Its function is as follows. Catalyzes the ATP-dependent conversion of 7-carboxy-7-deazaguanine (CDG) to 7-cyano-7-deazaguanine (preQ(0)). This Proteus mirabilis (strain HI4320) protein is 7-cyano-7-deazaguanine synthase.